Consider the following 349-residue polypeptide: Isopentenyl-diphosphate delta-isomerase (349 aa).

9–10 (RK) contacts substrate. Residues 65–67 (AMT), serine 95, and asparagine 124 each bind FMN. 95-97 (STH) is a binding site for substrate. Residue glutamine 154 coordinates substrate. A Mg(2+)-binding site is contributed by glutamate 155. FMN contacts are provided by residues lysine 186, serine 211, threonine 216, 262–264 (GLR), and 283–284 (SR).

This sequence belongs to the IPP isomerase type 2 family. Homooctamer. Dimer of tetramers. FMN is required as a cofactor. It depends on NADPH as a cofactor. Requires Mg(2+) as cofactor.

It localises to the cytoplasm. The enzyme catalyses isopentenyl diphosphate = dimethylallyl diphosphate. In terms of biological role, involved in the biosynthesis of isoprenoids. Catalyzes the 1,3-allylic rearrangement of the homoallylic substrate isopentenyl (IPP) to its allylic isomer, dimethylallyl diphosphate (DMAPP). This Staphylococcus aureus (strain JH1) protein is Isopentenyl-diphosphate delta-isomerase.